The primary structure comprises 156 residues: Probable chemoreceptor glutamine deamidase CheD (156 aa).

Belongs to the CheD family.

It catalyses the reaction L-glutaminyl-[protein] + H2O = L-glutamyl-[protein] + NH4(+). Functionally, probably deamidates glutamine residues to glutamate on methyl-accepting chemotaxis receptors (MCPs), playing an important role in chemotaxis. The polypeptide is Probable chemoreceptor glutamine deamidase CheD (Sulfurimonas denitrificans (strain ATCC 33889 / DSM 1251) (Thiomicrospira denitrificans (strain ATCC 33889 / DSM 1251))).